The sequence spans 232 residues: MVKFKAIRGVAFDLDGTLVDSAPGLARAIDMALAHQGLPAAGEALVSTWIGNGADVLVERALHWAGREHNAQLVAQTRELFDHYYAKTVEQGSQLFPQVKATLAQLAANGLPIGLITNKPTPFVAPLLTSLGIADYFSVIIGGDDVVVKKPHPAPLYLLLGKLGLHAREMLFVGDSRNDIMAAQAAGCPCIGLTYGYNYGEAIATSHPDCVLAHFADLLPAIGLPSLKDQEV.

The active-site Nucleophile is the D13. Mg(2+) is bound by residues D13, D15, and D175.

The protein belongs to the HAD-like hydrolase superfamily. CbbY/CbbZ/Gph/YieH family. Monomer. The cofactor is Mg(2+). Chloride serves as cofactor.

It catalyses the reaction 2-phosphoglycolate + H2O = glycolate + phosphate. Its pathway is organic acid metabolism; glycolate biosynthesis; glycolate from 2-phosphoglycolate: step 1/1. Its function is as follows. Specifically catalyzes the dephosphorylation of 2-phosphoglycolate. Is involved in the dissimilation of the intracellular 2-phosphoglycolate formed during the DNA repair of 3'-phosphoglycolate ends, a major class of DNA lesions induced by oxidative stress. This Yersinia pseudotuberculosis serotype I (strain IP32953) protein is Phosphoglycolate phosphatase.